A 395-amino-acid polypeptide reads, in one-letter code: 8-amino-3,8-dideoxy-alpha-D-manno-octulosonate transaminase (395 aa).

Lysine 186 carries the post-translational modification N6-(pyridoxal phosphate)lysine.

This sequence belongs to the DegT/DnrJ/EryC1 family. It depends on pyridoxal 5'-phosphate as a cofactor.

It catalyses the reaction 8-amino-3,8-dideoxy-alpha-D-manno-octulosonate + 2-oxoglutarate = 3,8-dideoxy-8-oxo-alpha-D-manno-octulosonate + L-glutamate. Its pathway is bacterial outer membrane biogenesis; lipopolysaccharide biosynthesis. Catalyzes the second (last) step of the biosynthesis of Kdo8N (8-amino-3,8-dideoxy-D-manno-octulosonate) from Kdo (3-deoxy-D-manno-octulosonate). The sequence is that of 8-amino-3,8-dideoxy-alpha-D-manno-octulosonate transaminase from Shewanella oneidensis (strain ATCC 700550 / JCM 31522 / CIP 106686 / LMG 19005 / NCIMB 14063 / MR-1).